Here is a 218-residue protein sequence, read N- to C-terminus: Probable transaldolase (218 aa).

Lysine 87 (schiff-base intermediate with substrate) is an active-site residue.

It belongs to the transaldolase family. Type 3B subfamily.

The protein localises to the cytoplasm. The catalysed reaction is D-sedoheptulose 7-phosphate + D-glyceraldehyde 3-phosphate = D-erythrose 4-phosphate + beta-D-fructose 6-phosphate. The protein operates within carbohydrate degradation; pentose phosphate pathway; D-glyceraldehyde 3-phosphate and beta-D-fructose 6-phosphate from D-ribose 5-phosphate and D-xylulose 5-phosphate (non-oxidative stage): step 2/3. Functionally, transaldolase is important for the balance of metabolites in the pentose-phosphate pathway. This Flavobacterium psychrophilum (strain ATCC 49511 / DSM 21280 / CIP 103535 / JIP02/86) protein is Probable transaldolase.